Consider the following 243-residue polypeptide: Phosphoribosylaminoimidazole-succinocarboxamide synthase (243 aa).

It belongs to the SAICAR synthetase family.

It catalyses the reaction 5-amino-1-(5-phospho-D-ribosyl)imidazole-4-carboxylate + L-aspartate + ATP = (2S)-2-[5-amino-1-(5-phospho-beta-D-ribosyl)imidazole-4-carboxamido]succinate + ADP + phosphate + 2 H(+). Its pathway is purine metabolism; IMP biosynthesis via de novo pathway; 5-amino-1-(5-phospho-D-ribosyl)imidazole-4-carboxamide from 5-amino-1-(5-phospho-D-ribosyl)imidazole-4-carboxylate: step 1/2. The protein is Phosphoribosylaminoimidazole-succinocarboxamide synthase of Thermosynechococcus vestitus (strain NIES-2133 / IAM M-273 / BP-1).